Here is a 302-residue protein sequence, read N- to C-terminus: UDP-N-acetylenolpyruvoylglucosamine reductase (302 aa).

Positions 27 to 192 (KTGGPADYVA…VSVTFGLKPG (166 aa)) constitute an FAD-binding PCMH-type domain. Residue R171 is part of the active site. The active-site Proton donor is S221. E291 is an active-site residue.

Belongs to the MurB family. FAD serves as cofactor.

Its subcellular location is the cytoplasm. It carries out the reaction UDP-N-acetyl-alpha-D-muramate + NADP(+) = UDP-N-acetyl-3-O-(1-carboxyvinyl)-alpha-D-glucosamine + NADPH + H(+). The protein operates within cell wall biogenesis; peptidoglycan biosynthesis. In terms of biological role, cell wall formation. The polypeptide is UDP-N-acetylenolpyruvoylglucosamine reductase (Lactiplantibacillus plantarum (strain ATCC BAA-793 / NCIMB 8826 / WCFS1) (Lactobacillus plantarum)).